We begin with the raw amino-acid sequence, 318 residues long: MNWISNYVRPRINSIFSRRETPENLWSKCSECGTMLFHRELSDNLNVCTNCDHHMALTPRDRFTALFDNGIFTQITVPEPLTDPLKFRDQKKYPDRMKAARTATSEAEAMLVAEGEMGRTPIVAAAQDFSFMGGSMGMFVGNAIIAAAERAVALKRPLILFSAAGGARMQEGILSLMQMPRTTVAVQMLKEANLPYIVVLTHPTTGGVTASYAMLGDVHIAEPNALICFAGPRVIEQTIREKLPEGFQRAEYLLDHGMLDRVTHRARMRDELITITRMLMGQTPAVKGELPAPAPLESDAETALASDTDPNGAPPSKD.

Positions 25-294 (LWSKCSECGT…AVKGELPAPA (270 aa)) constitute a CoA carboxyltransferase N-terminal domain. Cys-29, Cys-32, Cys-48, and Cys-51 together coordinate Zn(2+). The C4-type zinc finger occupies 29–51 (CSECGTMLFHRELSDNLNVCTNC). The disordered stretch occupies residues 286–318 (VKGELPAPAPLESDAETALASDTDPNGAPPSKD).

This sequence belongs to the AccD/PCCB family. In terms of assembly, acetyl-CoA carboxylase is a heterohexamer composed of biotin carboxyl carrier protein (AccB), biotin carboxylase (AccC) and two subunits each of ACCase subunit alpha (AccA) and ACCase subunit beta (AccD). Requires Zn(2+) as cofactor.

The protein localises to the cytoplasm. The enzyme catalyses N(6)-carboxybiotinyl-L-lysyl-[protein] + acetyl-CoA = N(6)-biotinyl-L-lysyl-[protein] + malonyl-CoA. The protein operates within lipid metabolism; malonyl-CoA biosynthesis; malonyl-CoA from acetyl-CoA: step 1/1. Its function is as follows. Component of the acetyl coenzyme A carboxylase (ACC) complex. Biotin carboxylase (BC) catalyzes the carboxylation of biotin on its carrier protein (BCCP) and then the CO(2) group is transferred by the transcarboxylase to acetyl-CoA to form malonyl-CoA. This Jannaschia sp. (strain CCS1) protein is Acetyl-coenzyme A carboxylase carboxyl transferase subunit beta.